An 88-amino-acid chain; its full sequence is MRLFLSLPVLVVVLAMVLEGPAPTQAAPEISSTLGRIPEKLKEFGNTLEDKARAAVESIKQSDIPAKTRNWFSETFNKVKEQLKTAFS.

The signal sequence occupies residues 1–26 (MRLFLSLPVLVVVLAMVLEGPAPTQA).

It belongs to the apolipoprotein C1 family.

It localises to the secreted. In terms of biological role, inhibitor of lipoprotein binding to the low density lipoprotein (LDL) receptor, LDL receptor-related protein, and very low density lipoprotein (VLDL) receptor. Associates with high density lipoproteins (HDL) and the triacylglycerol-rich lipoproteins in the plasma and makes up about 10% of the protein of the VLDL and 2% of that of HDL. Appears to interfere directly with fatty acid uptake and is also the major plasma inhibitor of cholesteryl ester transfer protein (CETP). Binds free fatty acids and reduces their intracellular esterification. Modulates the interaction of APOE with beta-migrating VLDL and inhibits binding of beta-VLDL to the LDL receptor-related protein. The protein is Apolipoprotein C-I (APOC1) of Mirounga angustirostris (Northern elephant seal).